Consider the following 144-residue polypeptide: uncharacterized protein (144 aa).

Positions 98 to 127 are disordered; sequence PLADGATVDSQASENGEKEAQPTPPKEGLL.

This is an uncharacterized protein from Aedes vexans (Inland floodwater mosquito).